Here is a 201-residue protein sequence, read N- to C-terminus: Inosine triphosphate pyrophosphatase (201 aa).

16–21 (TGNAKK) is an ITP binding site. Position 44 (E44) interacts with Mg(2+). ITP is bound by residues K56, 72-73 (DT), K89, 148-151 (FGWD), K171, and 176-177 (HR).

The protein belongs to the HAM1 NTPase family. As to quaternary structure, homodimer. Mg(2+) serves as cofactor. The cofactor is Mn(2+).

It is found in the cytoplasm. The catalysed reaction is ITP + H2O = IMP + diphosphate + H(+). It catalyses the reaction dITP + H2O = dIMP + diphosphate + H(+). The enzyme catalyses XTP + H2O = XMP + diphosphate + H(+). Its function is as follows. Pyrophosphatase that hydrolyzes non-canonical purine nucleotides such as inosine triphosphate (ITP), deoxyinosine triphosphate (dITP) or xanthosine 5'-triphosphate (XTP) to their respective monophosphate derivatives. The enzyme does not distinguish between the deoxy- and ribose forms. Probably excludes non-canonical purines from RNA and DNA precursor pools, thus preventing their incorporation into RNA and DNA and avoiding chromosomal lesions. This is Inosine triphosphate pyrophosphatase from Zea mays (Maize).